We begin with the raw amino-acid sequence, 299 residues long: NAD kinase (299 aa).

Aspartate 75 functions as the Proton acceptor in the catalytic mechanism. NAD(+) is bound by residues 75–76 (DG), 149–150 (ND), arginine 177, aspartate 179, 190–195 (TAYALS), alanine 214, and glutamine 248.

The protein belongs to the NAD kinase family. Requires a divalent metal cation as cofactor.

The protein localises to the cytoplasm. It carries out the reaction NAD(+) + ATP = ADP + NADP(+) + H(+). In terms of biological role, involved in the regulation of the intracellular balance of NAD and NADP, and is a key enzyme in the biosynthesis of NADP. Catalyzes specifically the phosphorylation on 2'-hydroxyl of the adenosine moiety of NAD to yield NADP. The polypeptide is NAD kinase (Burkholderia thailandensis (strain ATCC 700388 / DSM 13276 / CCUG 48851 / CIP 106301 / E264)).